A 397-amino-acid polypeptide reads, in one-letter code: MGCIKVISVFLAAIAAVDARAFFHNRGGSDVIPNSYIVVMKDGVTTEDFDSHISTVAATHNLNKAKRGSEAVGHKDSFNINGWRAYNGHFDEATIESILNDDKVNYVEHDRVVKLAALVTQPNAPTWGLGRVSHRAPGNRDFVYDSSAGQGITIYGVDTGIDIRHPEFAGRIRWGTNTVDNDNTDGNGHGTHTAGTFAGTTYGVAKKANIVAVKVLSAGGSGSTAGVIKGIDWCVTDVRSRNALGKAALNLSLGGSFSQANNDAVTRAQEAGIFVAVAAGNDNRDARNYSPASAPAVCTAASSTIDDQKSSFSNWGSIVDIYAPGSSILSAAPGGGTRTLSGTSMASPHVCGVGAAMLAQGVSVAQVCNRLKQIGNAVIRNPGTSTTNRLLYNGSGQ.

The signal sequence occupies residues 1–19; that stretch reads MGCIKVISVFLAAIAAVDA. Positions 20-116 are excised as a propeptide; that stretch reads RAFFHNRGGS…VEHDRVVKLA (97 aa). Residues 35–116 form the Inhibitor I9 domain; the sequence is SYIVVMKDGV…VEHDRVVKLA (82 aa). The Peptidase S8 domain maps to 126–397; the sequence is TWGLGRVSHR…NRLLYNGSGQ (272 aa). Catalysis depends on charge relay system residues Asp158 and His189. Asn250 carries an N-linked (GlcNAc...) asparagine glycan. Ser344 serves as the catalytic Charge relay system. N-linked (GlcNAc...) asparagine glycosylation occurs at Asn393.

Belongs to the peptidase S8 family.

It localises to the secreted. Its function is as follows. Secreted subtilisin-like serine protease with keratinolytic activity that contributes to pathogenicity. This is Subtilisin-like protease 3 (SUB3) from Trichophyton tonsurans (Scalp ringworm fungus).